The following is a 301-amino-acid chain: Glycine--tRNA ligase alpha subunit (301 aa).

Belongs to the class-II aminoacyl-tRNA synthetase family. In terms of assembly, tetramer of two alpha and two beta subunits.

The protein localises to the cytoplasm. The enzyme catalyses tRNA(Gly) + glycine + ATP = glycyl-tRNA(Gly) + AMP + diphosphate. This chain is Glycine--tRNA ligase alpha subunit, found in Variovorax paradoxus (strain S110).